Reading from the N-terminus, the 285-residue chain is Catechol-2,3-dioxygenase (285 aa).

2 consecutive VOC domains span residues 9–126 (HIGY…MYAD) and 169–285 (IIGH…TFVI). Fe cation is bound by residues H213 and E264.

This sequence belongs to the extradiol ring-cleavage dioxygenase family. The cofactor is Fe(2+).

It carries out the reaction catechol + O2 = (2Z,4E)-2-hydroxy-6-oxohexa-2,4-dienoate + H(+). Functionally, involved in the meta cleavage of catechol to 2-hydroxymuconic semialdehyde. Essential for growth and viability in the presence of catechol and probably involved in the detoxification of catechol. The protein is Catechol-2,3-dioxygenase (catE) of Bacillus subtilis (strain 168).